Reading from the N-terminus, the 216-residue chain is uncharacterized protein (216 aa).

The span at 182-193 (STSNASVNSDDA) shows a compositional bias: polar residues. Residues 182–204 (STSNASVNSDDASTAELGPTSEE) form a disordered region.

This is an uncharacterized protein from Caenorhabditis elegans.